A 322-amino-acid polypeptide reads, in one-letter code: uncharacterized protein (322 aa).

The stretch at 205 to 286 forms a coiled coil; it reads QEIKNAHAAL…LKKAISEAVQ (82 aa). Basic and acidic residues-rich tracts occupy residues 254–281 and 290–299; these read EKEE…KKAI and DRIEAIEKSR. A disordered region spans residues 254-322; sequence EKEEELNKKD…VQKSIWSGLF (69 aa). Polar residues predominate over residues 310 to 322; that stretch reads SEQVQKSIWSGLF.

It to B.subtilis XkdF.

This is an uncharacterized protein from Bacillus subtilis (strain 168).